The primary structure comprises 686 residues: Protein SDA1 homolog (686 aa).

Ser-232, Ser-234, and Ser-236 each carry phosphoserine. Residues 254-315 (KKGSKNKKKL…SCKERFEVKM (62 aa)) are a coiled coil. The disordered stretch occupies residues 484–508 (LEKEENTENDEDGWESASLSEEEED). Positions 490–508 (TENDEDGWESASLSEEEED) are enriched in acidic residues. The residue at position 551 (Thr-551) is a Phosphothreonine. Residues 563 to 586 (MKKEMDAAPGKAQKRKYLDMDSDE) are disordered. Residues Ser-584, Ser-588, and Ser-594 each carry the phosphoserine modification. The segment at 604-649 (KPKSDKETRLATAMAGRTDRKEFVRKKTKINPFSSSTNKEKKKQKN) is disordered.

This sequence belongs to the SDA1 family.

It localises to the nucleus. The protein localises to the nucleolus. Required for 60S pre-ribosomal subunits export to the cytoplasm. The protein is Protein SDA1 homolog (Sdad1) of Rattus norvegicus (Rat).